We begin with the raw amino-acid sequence, 469 residues long: Glutamate--tRNA ligase (469 aa).

Residues 9 to 19 (PSPTGYLHVGG) carry the 'HIGH' region motif. Zn(2+) is bound by residues Cys-98, Cys-100, Cys-125, and Asp-127. Residues 237–241 (KLSKR) carry the 'KMSKS' region motif. Residue Lys-240 participates in ATP binding.

This sequence belongs to the class-I aminoacyl-tRNA synthetase family. Glutamate--tRNA ligase type 1 subfamily. In terms of assembly, monomer. Requires Zn(2+) as cofactor.

It is found in the cytoplasm. The enzyme catalyses tRNA(Glu) + L-glutamate + ATP = L-glutamyl-tRNA(Glu) + AMP + diphosphate. Catalyzes the attachment of glutamate to tRNA(Glu) in a two-step reaction: glutamate is first activated by ATP to form Glu-AMP and then transferred to the acceptor end of tRNA(Glu). The chain is Glutamate--tRNA ligase from Erwinia tasmaniensis (strain DSM 17950 / CFBP 7177 / CIP 109463 / NCPPB 4357 / Et1/99).